The sequence spans 808 residues: DNA gyrase subunit B (808 aa).

The Toprim domain occupies 429-544 (SELFIVEGDS…KGYLYIAQPP (116 aa)). Residues glutamate 435, aspartate 509, and aspartate 511 each contribute to the Mg(2+) site.

This sequence belongs to the type II topoisomerase GyrB family. Heterotetramer, composed of two GyrA and two GyrB chains. In the heterotetramer, GyrA contains the active site tyrosine that forms a transient covalent intermediate with DNA, while GyrB binds cofactors and catalyzes ATP hydrolysis. The cofactor is Mg(2+). Mn(2+) is required as a cofactor. Requires Ca(2+) as cofactor.

It is found in the cytoplasm. The enzyme catalyses ATP-dependent breakage, passage and rejoining of double-stranded DNA.. Functionally, a type II topoisomerase that negatively supercoils closed circular double-stranded (ds) DNA in an ATP-dependent manner to modulate DNA topology and maintain chromosomes in an underwound state. Negative supercoiling favors strand separation, and DNA replication, transcription, recombination and repair, all of which involve strand separation. Also able to catalyze the interconversion of other topological isomers of dsDNA rings, including catenanes and knotted rings. Type II topoisomerases break and join 2 DNA strands simultaneously in an ATP-dependent manner. The chain is DNA gyrase subunit B from Rickettsia bellii (strain RML369-C).